The sequence spans 628 residues: Kinesin-like protein KIN-10B (628 aa).

The Kinesin motor domain maps to 20–340; sequence NVRVVLRVRP…VSLAARSRHI (321 aa). 114–121 is a binding site for ATP; the sequence is GATGSGKT. Positions 496–519 are disordered; sequence SPIDSNAKPNSAHGSSPFLKPMTP. Residues 498–509 are compositionally biased toward polar residues; sequence IDSNAKPNSAHG.

The protein belongs to the TRAFAC class myosin-kinesin ATPase superfamily. Kinesin family. KIN-10 subfamily.

In Arabidopsis thaliana (Mouse-ear cress), this protein is Kinesin-like protein KIN-10B.